The chain runs to 261 residues: ClpXP adapter protein SpxH (261 aa).

It belongs to the SpxH family. In terms of assembly, interacts with Spx.

The protein resides in the cytoplasm. Adapter protein required for efficient degradation of Spx by ClpXP under non-stress conditions. Interaction with Spx stabilizes Spx and exposes the C-terminus of Spx for recognition and proteolysis by ClpXP. This is ClpXP adapter protein SpxH from Staphylococcus aureus.